The sequence spans 263 residues: MASSSSVLLVVALFAVFLGSAHGIAKVPPGPNITAEYGDKWLDAKSTWYGKPTGAGPKDNGGACGYKNVDKAPFNGMTGCGNTPIFKDGRGCGSCFEIKCTKPESCSGEAVTVTITDDNEEPIAPYHFDLSGHAFGSMAKKGEEQNVRSAGELELQFRRVKCKYPDDTKPTFHVEKASNPNYLAILVKYVDGDGDVVAVDIKEKGKDKWIELKESWGAVWRIDTPDKLTGPFTVRYTTEGGTKSEFEDVIPEGWKADTSYSAK.

Positions Met1–Gly23 are cleaved as a signal peptide. Asn32 is a glycosylation site (N-linked (GlcNAc...) asparagine). In terms of domain architecture, Expansin-like EG45 spans Gly61–Asp167. The Expansin-like CBD domain maps to Asn181–Ala262.

It belongs to the expansin family. Expansin B subfamily.

Its subcellular location is the secreted. This Lolium perenne (Perennial ryegrass) protein is Pollen allergen Lol p 1.